The sequence spans 502 residues: 9-beta-pimara-7,15-diene oxidase (502 aa).

Transmembrane regions (helical) follow at residues 4 to 26 (INSEATVTLVSVVTLPILLALLT) and 106 to 128 (LLVSEIFCYGNLDIGFAPYGAYW). Heme is bound at residue Cys-438.

This sequence belongs to the cytochrome P450 family. The cofactor is heme.

It localises to the membrane. The enzyme catalyses 9beta-pimara-7,15-diene + 3 reduced [NADPH--hemoprotein reductase] + 3 O2 = 9beta-pimara-7,15-dien-19-oate + 3 oxidized [NADPH--hemoprotein reductase] + 4 H2O + 4 H(+). Its function is as follows. Involved in momilactone phytoalexins biosynthesis; acts as a multifunctional diterpene oxidase. Participates in the biosynthetic steps between 9-beta-pimara-7,15-diene and 3-beta-hydroxy-9-beta-pimara-7,15-dien-19,6-beta-olide. Also catalyzes consecutive oxidations at C19 of syn-stemod-13(17)-ene. The sequence is that of 9-beta-pimara-7,15-diene oxidase (CYP99A3) from Oryza sativa subsp. japonica (Rice).